A 222-amino-acid chain; its full sequence is Charged multivesicular body protein 4a (222 aa).

Disordered regions lie at residues 1-21 (MSGL…TPEE) and 180-211 (VGDK…DEDE). The interaction with phosphoinosides stretch occupies residues 1-116 (MSGLGRLFGK…ELAAQSMKKA (116 aa)). Residues 1-150 (MSGLGRLFGK…QISDAISRPM (150 aa)) are intramolecular interaction with C-terminus. Coiled-coil stretches lie at residues 20 to 105 (EEAI…VLRT) and 155 to 180 (DVDE…LLNV). The interval 151–222 (GFGDDVDEDE…ALKQLAEWVS (72 aa)) is intramolecular interaction with N-terminus. The residue at position 196 (S196) is a Phosphoserine.

This sequence belongs to the SNF7 family. In terms of assembly, probable core component of the endosomal sorting required for transport complex III (ESCRT-III). ESCRT-III components are thought to multimerize to form a flat lattice on the perimeter membrane of the endosome. Several assembly forms of ESCRT-III may exist that interact and act sequentially. Self-associates; overexpression leads to the assembly of filaments that curve and associate to create circular rings. Interacts with CHMP2A. Interacts with CHMP3; the interaction requires the release of CHMP4A autoinhibition. Interacts with CHMP4B. Interacts with CHMP4C. Interacts with CHMP6. Interacts with VPS4A. Interacts with PDCD6IP; the interaction is direct. Widely expressed. Expressed at higher level in heart, kidney, liver and skeletal muscle. Also expressed in brain, placenta, lung and pancreas.

Its subcellular location is the cytoplasmic vesicle membrane. It localises to the late endosome membrane. Probable core component of the endosomal sorting required for transport complex III (ESCRT-III) which is involved in multivesicular bodies (MVBs) formation and sorting of endosomal cargo proteins into MVBs. MVBs contain intraluminal vesicles (ILVs) that are generated by invagination and scission from the limiting membrane of the endosome and mostly are delivered to lysosomes enabling degradation of membrane proteins, such as stimulated growth factor receptors, lysosomal enzymes and lipids. The MVB pathway appears to require the sequential function of ESCRT-O, -I,-II and -III complexes. ESCRT-III proteins mostly dissociate from the invaginating membrane before the ILV is released. The ESCRT machinery also functions in topologically equivalent membrane fission events, such as the terminal stages of cytokinesis and the budding of enveloped viruses (HIV-1 and other lentiviruses). ESCRT-III proteins are believed to mediate the necessary vesicle extrusion and/or membrane fission activities, possibly in conjunction with the AAA ATPase VPS4. When overexpressed, membrane-assembled circular arrays of CHMP4A filaments can promote or stabilize negative curvature and outward budding. Via its interaction with PDCD6IP involved in HIV-1 p6- and p9-dependent virus release. CHMP4A/B/C are required for the exosomal release of SDCBP, CD63 and syndecan. The sequence is that of Charged multivesicular body protein 4a (CHMP4A) from Homo sapiens (Human).